A 309-amino-acid chain; its full sequence is Cytochrome c1, heme protein, mitochondrial (309 aa).

The transit peptide at 1 to 61 (MFSNLSKRWA…LYADSLTAEA (61 aa)) directs the protein to the mitochondrion. Residues 62-262 (MTAAEHGLHA…TFLNWCAEPE (201 aa)) are Mitochondrial intermembrane-facing. The Cytochrome c domain maps to 88–241 (ASIRRGYQVY…DMVEYEDGTP (154 aa)). Cysteine 101, cysteine 104, and histidine 105 together coordinate heme c. Residues 131–140 (EFEYDDEPDE) show a composition bias toward acidic residues. The interval 131-168 (EFEYDDEPDEQGNPKKRPGKLSDYIPGPYPNEQAARAA) is disordered. Methionine 225 contributes to the heme c binding site. A helical membrane pass occupies residues 263–296 (HDERKRLGLKTVIILSSLYLLSIWVKKFKWAGIK). Over 297–309 (TRKFVFNPPKPRK) the chain is Mitochondrial matrix.

The protein belongs to the cytochrome c family. As to quaternary structure, component of the ubiquinol-cytochrome c oxidoreductase (cytochrome b-c1 complex, complex III, CIII), a multisubunit enzyme composed of 10 subunits. The complex is composed of 3 respiratory subunits cytochrome b (COB), cytochrome c1 (CYT1) and Rieske protein (RIP1), 2 core protein subunits COR1 and QCR2, and 5 low-molecular weight protein subunits QCR6, QCR7, QCR8, QCR9 and QCR10. The complex exists as an obligatory dimer and forms supercomplexes (SCs) in the inner mitochondrial membrane with a monomer or a dimer of cytochrome c oxidase (complex IV, CIV), resulting in 2 different assemblies (supercomplexes III(2)IV and III(2)IV(2)). CYT1 interacts with COX5A at the CIII-CIV interface. Heme c serves as cofactor.

It localises to the mitochondrion inner membrane. It carries out the reaction a quinol + 2 Fe(III)-[cytochrome c](out) = a quinone + 2 Fe(II)-[cytochrome c](out) + 2 H(+)(out). Component of the ubiquinol-cytochrome c oxidoreductase, a multisubunit transmembrane complex that is part of the mitochondrial electron transport chain which drives oxidative phosphorylation. The respiratory chain contains 3 multisubunit complexes succinate dehydrogenase (complex II, CII), ubiquinol-cytochrome c oxidoreductase (cytochrome b-c1 complex, complex III, CIII) and cytochrome c oxidase (complex IV, CIV), that cooperate to transfer electrons derived from NADH and succinate to molecular oxygen, creating an electrochemical gradient over the inner membrane that drives transmembrane transport and the ATP synthase. The cytochrome b-c1 complex catalyzes electron transfer from ubiquinol to cytochrome c, linking this redox reaction to translocation of protons across the mitochondrial inner membrane, with protons being carried across the membrane as hydrogens on the quinol. In the process called Q cycle, 2 protons are consumed from the matrix, 4 protons are released into the intermembrane space and 2 electrons are passed to cytochrome c. Cytochrome c1 is a catalytic core subunit containing a c-type heme. It transfers electrons from the [2Fe-2S] iron-sulfur cluster of the Rieske protein to cytochrome c. The protein is Cytochrome c1, heme protein, mitochondrial (CYT1) of Saccharomyces cerevisiae (strain ATCC 204508 / S288c) (Baker's yeast).